Consider the following 154-residue polypeptide: Jupiter microtubule associated homolog 1 (154 aa).

The residue at position 1 (methionine 1) is an N-acetylmethionine. A compositionally biased stretch (polar residues) spans 1–19 (MTTTTTFKGVDPNSRNSSR). Residues 1 to 154 (MTTTTTFKGV…PGGKSSLVLG (154 aa)) form a disordered region. Threonine 2 is modified (N-acetylthreonine; in Hematological and neurological expressed 1 protein, N-terminally processed). Serine 28 and serine 31 each carry phosphoserine. Position 54 is a phosphothreonine (threonine 54). Phosphoserine is present on residues serine 71, serine 87, serine 88, and serine 92. Residues 79–91 (SPGTQRSNSSEAS) are compositionally biased toward polar residues. The segment covering 96–108 (LDLKGEGDMHENV) has biased composition (basic and acidic residues). Residues 125–138 (PAAPVPSPVAPAPV) are compositionally biased toward pro residues. Serine 131 carries the post-translational modification Phosphoserine. Lysine 148 carries the N6-acetyllysine modification.

The protein belongs to the JUPITER family. Interacts with the complex composed, at least, of APC, CTNNB1 and GSK3B; the interaction takes place with the inactive form of GSK3B (phosphorylated at 'Ser-9'). Expressed in yolk sac, fetal brain, brain, spleen and bone marrow.

It is found in the nucleus. The protein localises to the cytoplasm. Its function is as follows. Modulates negatively AKT-mediated GSK3B signaling. Induces CTNNB1 'Ser-33' phosphorylation and degradation through the suppression of the inhibitory 'Ser-9' phosphorylation of GSK3B, which represses the function of the APC:CTNNB1:GSK3B complex and the interaction with CDH1/E-cadherin in adherent junctions. Plays a role in the regulation of cell cycle and cell adhesion. Has an inhibitory role on AR-signaling pathway through the induction of receptor proteasomal degradation. This chain is Jupiter microtubule associated homolog 1, found in Mus musculus (Mouse).